Reading from the N-terminus, the 70-residue chain is Small, acid-soluble spore protein I (70 aa).

This sequence belongs to the SspI family.

Its subcellular location is the spore core. The chain is Small, acid-soluble spore protein I from Bacillus cytotoxicus (strain DSM 22905 / CIP 110041 / 391-98 / NVH 391-98).